The primary structure comprises 489 residues: Actin-related protein 4 (489 aa).

Residues 323-379 form a disordered region; it reads KRTKPSGVNKSDKKVTPTEEKEQEAVSKSTSPAANSADTPNETGKRPLEEEKPPKEN. Basic and acidic residues predominate over residues 332–347; the sequence is KSDKKVTPTEEKEQEA. Residues 348–364 show a composition bias toward polar residues; sequence VSKSTSPAANSADTPNE. Ser349 is subject to Phosphoserine. The segment covering 365–379 has biased composition (basic and acidic residues); that stretch reads TGKRPLEEEKPPKEN.

It belongs to the actin family. ARP4 subfamily. As to quaternary structure, component of the NuA4 histone acetyltransferase complex composed of at least ACT1, ARP4, EAF3, EAF5, EAF6, EAF7, EPL1, ESA1, SWC4, TRA1, VID21, YAF9 and YNG2. Component of the chromatin-remodeling INO80 complex, at least composed of ARP4, ARP5, ARP8, RVB1, RVB2, TAF14, NHP10, IES1, IES3, IES4, IES6, ACT1, IES2, IES5 and INO80. Component of the SWR1 chromatin remodeling complex composed of at least ACT1, ARP4, RVB1, RVB2, ARP6, YAF9, VPS71, VPS72, SWC3, SWC4, SWC5, SWC7 and SWR1, and perhaps BDF1. Interacts with histones H4 (HHF1 and HHF2), H3 (HHT1 and HHT2) and H2A (HTA1 and HTA2).

It localises to the nucleus. Functionally, chromatin interaction component of the NuA4 histone acetyltransferase complex which is involved in transcriptional activation of selected genes principally by acetylation of nucleosomal histone H4 and H2A. The NuA4 complex is also involved in DNA repair. ARP4 recognizes H2AS128ph (gamma-H2A) and is required for NuA4 complex integrity. Component of the SWR1 complex which mediates the ATP-dependent exchange of histone H2A for the H2A variant HZT1 leading to transcriptional regulation of selected genes by chromatin remodeling. Component of the INO80 complex which remodels chromatin by shifting nucleosomes. Its ability to induce transcription of some phosphate-responsive genes is modulated by inositol polyphosphates. The INO80 complex is involved in DNA repair by associating to gamma-H2A as a response to DNA damage. This chain is Actin-related protein 4 (ARP4), found in Saccharomyces cerevisiae (strain ATCC 204508 / S288c) (Baker's yeast).